Consider the following 806-residue polypeptide: SH3-containing GRB2-like protein 3-interacting protein 1 (806 aa).

Disordered regions lie at residues 1-115 and 142-278; these read MMEG…ESHK and SIGN…QAAT. Basic and acidic residues-rich tracts occupy residues 16–32 and 40–54; these read RKKE…DRDG and PPYH…EGGK. 8 positions are modified to phosphoserine: Ser-78, Ser-104, Ser-105, Ser-107, Ser-149, Ser-151, Ser-156, and Ser-169. Phosphothreonine occurs at positions 180 and 182. Phosphoserine is present on residues Ser-236 and Phe-243. Pro residues predominate over residues 245–260; the sequence is TGTPPPLPPKTVPATP. Thr-247 and Thr-259 each carry phosphothreonine. A phosphoserine mark is found at Ser-265, Asp-274, Ser-287, Ser-289, Ser-300, Ser-316, and Ser-319. The segment covering 265 to 276 has biased composition (polar residues); the sequence is SPLTVATGNDQA. The segment covering 315–324 has biased composition (basic and acidic residues); it reads FSDASPEHVT. The interval 315–533 is disordered; that stretch reads FSDASPEHVT…SRGPSPLTMG (219 aa). 3 positions are modified to phosphothreonine: Thr-324, Thr-328, and Thr-335. Positions 335 to 345 are enriched in low complexity; it reads TPPAASDIPAD. At Ala-338 the chain carries Phosphoserine. A compositionally biased stretch (pro residues) spans 346 to 369; the sequence is SPAPAPPGPTGSAGPPGPPGPRHV. Ser-371 is modified (phosphoserine). The span at 377–392 shows a compositional bias: basic and acidic residues; it reads EVQKKVAEQTFIKDDY. At Ser-398 the chain carries Phosphoserine. Residue Thr-409 is modified to Phosphothreonine. Residues 436-453 are compositionally biased toward low complexity; that stretch reads TSGASSPARPATPLVPCS. The segment covering 454 to 473 has biased composition (pro residues); that stretch reads TTPPPPPPRPPSRPKLPPGK. Composition is skewed to low complexity over residues 480–490 and 497–520; these read SRPFSPPIHSS and PLAR…TTPT. Phosphoserine is present on residues Ser-484, Ser-505, and Gly-533. The MHD domain occupies 537–805; it reads TLPVAAAFTE…RFAAGKYLAD (269 aa). Interaction with DPF motifs-containing proteins stretches follow at residues 539–545, 571–573, 645–648, and 791–796; these read PVAAAFT, SFP, TYYN, and SLIKKR. The interval 627 to 806 is necessary and sufficient to mediate interaction with CANX; that stretch reads MPNLMTHLKK…FAAGKYLADN (180 aa).

As to quaternary structure, interacts with proteins essential or regulating the formation of functional clathrin-coated pits. Interacts with CANX. Interacts with AP2A1. Interacts with EPS15. Interacts with SH3GL3. Interacts with AMPH. Interacts with ITSN1 (via SH3 domains). Interacts with and REPS1. Detected in brain, spinal cord and cerebellum.

Its subcellular location is the membrane. It localises to the clathrin-coated pit. In terms of biological role, may function in clathrin-mediated endocytosis. Has both a membrane binding/tubulating activity and the ability to recruit proteins essential to the formation of functional clathrin-coated pits. Has a preference for membranes enriched in phosphatidylserine and phosphoinositides and is required for the endocytosis of the transferrin receptor. May also bind tubulin. May play a role in the regulation of energy homeostasis. The sequence is that of SH3-containing GRB2-like protein 3-interacting protein 1 (Sgip1) from Mus musculus (Mouse).